A 2282-amino-acid polypeptide reads, in one-letter code: Acetyl-CoA carboxylase (2282 aa).

In terms of domain architecture, Biotin carboxylation spans 16–515 (NIEKILIANN…HTGWLDQLIS (500 aa)). An ATP-grasp domain is found at 170–360 (YSECNGVPSE…LPATQLQIAM (191 aa)). Residue 196 to 253 (AQRVGFPAMIKASEGGGGKGIRKVTSMEDLESSFRQVQNEVPGSPIFFMKLVSNARHL) coordinates ATP. Mn(2+)-binding residues include glutamate 319, glutamate 331, and asparagine 333. Arginine 335 is an active-site residue. Positions 646–720 (FSQEYDPSIL…APGAIIANLE (75 aa)) constitute a Biotinyl-binding domain. Lysine 687 carries the post-translational modification N6-biotinyllysine. Over residues 1109-1129 (GSNSGSPTYGSPLIRSISSSG) the composition is skewed to low complexity. Residues 1109 to 1141 (GSNSGSPTYGSPLIRSISSSGGSSGGSGFQISP) form a disordered region. In terms of domain architecture, CoA carboxyltransferase N-terminal spans 1495-1851 (PYPIMDAVQR…SGGEMVPIIS (357 aa)). The carboxyltransferase stretch occupies residues 1495–2178 (PYPIMDAVQR…EEDKLKLIDK (684 aa)). CoA contacts are provided by arginine 1761, lysine 2068, and arginine 2070. In terms of domain architecture, CoA carboxyltransferase C-terminal spans 1852–2178 (PIDSPHRDIE…EEDKLKLIDK (327 aa)).

The cofactor is biotin. Mn(2+) serves as cofactor.

It localises to the cytoplasm. The catalysed reaction is hydrogencarbonate + acetyl-CoA + ATP = malonyl-CoA + ADP + phosphate + H(+). The enzyme catalyses N(6)-biotinyl-L-lysyl-[protein] + hydrogencarbonate + ATP = N(6)-carboxybiotinyl-L-lysyl-[protein] + ADP + phosphate + H(+). It functions in the pathway lipid metabolism; malonyl-CoA biosynthesis; malonyl-CoA from acetyl-CoA: step 1/1. Its function is as follows. Catalyzes the rate-limiting reaction in the biogenesis of long-chain fatty acids. Carries out three functions: biotin carboxyl carrier protein, biotin carboxylase and carboxyltransferase. This is Acetyl-CoA carboxylase (accA) from Dictyostelium discoideum (Social amoeba).